The sequence spans 445 residues: ATP-dependent rRNA helicase rrp3 (445 aa).

Basic and acidic residues predominate over residues 1 to 10 (MSKNSSRDSS). The disordered stretch occupies residues 1–28 (MSKNSSRDSSPEEVSPDTETPSTTTAPK). The span at 17–28 (DTETPSTTTAPK) shows a compositional bias: low complexity. The short motif at 28 to 56 (KTFRELGVIDSLCEACEELGYTAPTPIQE) is the Q motif element. Residues 59 to 229 (IPIALEGRDL…RASLSDPVRV (171 aa)) form the Helicase ATP-binding domain. 72–79 (AETGSGKT) is an ATP binding site. Residues 178–181 (DEAD) carry the DEAD box motif. In terms of domain architecture, Helicase C-terminal spans 240–400 (KLLQSYLFIP…EYKPEKDEVM (161 aa)). The interval 415-445 (LTMRDMQDKDNKGRGPRNRKRTRDDLDQDDG) is disordered.

The protein belongs to the DEAD box helicase family. DDX47/RRP3 subfamily. As to quaternary structure, interacts with the SSU processome.

It localises to the nucleus. It catalyses the reaction ATP + H2O = ADP + phosphate + H(+). Its function is as follows. ATP-dependent rRNA helicase required for pre-ribosomal RNA processing. Involved in the maturation of the 35S-pre-rRNA and to its cleavage to mature 18S rRNA. The chain is ATP-dependent rRNA helicase rrp3 from Aspergillus terreus (strain NIH 2624 / FGSC A1156).